The chain runs to 136 residues: Frataxin, mitochondrial (136 aa).

Belongs to the frataxin family. Monomer. Oligomer.

Its subcellular location is the mitochondrion. It carries out the reaction 4 Fe(2+) + O2 + 4 H(+) = 4 Fe(3+) + 2 H2O. Functionally, promotes the biosynthesis of heme as well as the assembly and repair of iron-sulfur clusters by delivering Fe(2+) to proteins involved in these pathways. May play a role in the protection against iron-catalyzed oxidative stress through its ability to catalyze the oxidation of Fe(2+) to Fe(3+). May be able to store large amounts of the metal in the form of a ferrihydrite mineral by oligomerization. The sequence is that of Frataxin, mitochondrial (frh-1) from Caenorhabditis elegans.